Consider the following 428-residue polypeptide: Cytokine-dependent hematopoietic cell linker (428 aa).

A disordered region spans residues 1 to 22 (MNRQGNRKTTKEGSNDLKFQNF). Phosphotyrosine; by LYN occurs at positions 69 and 96. Disordered stretches follow at residues 135–198 (DKPI…EVQR) and 244–271 (SSSFTTSNHSVQNRDHRGGMQPCSPQRC). The tract at residues 159–164 (PLPPPR) is mediates interaction with PLCG1; essential for BCR signaling; involved in restoration of BCR-induced calcium response and ERK2 and JNK2 activation in BLNK-deficient cells expressing LAT. The tract at residues 178 to 180 (PEP) is mediates interaction with LAT, GRB2, and FGR; involved in translocation to the glycolipid-enriched microdomain and restoration of BCR-induced calcium response in BLNK-deficient DT40 cells expressing LAT. The segment covering 244–253 (SSSFTTSNHS) has biased composition (low complexity). The SH2 domain occupies 309–419 (WYIGEYSRQA…RKQCHLTQPL (111 aa)).

In terms of assembly, when phosphorylated, interacts with PLCG1, PLCG2, GRB2, VAV and LAT. Interacts with LBR and AGO2. Interacts with FGR. Part of a complex consisting of CLNK, SKAP1 and FYB1. Interacts (via SH2 domain) with FYB1; this interaction allows SKAP1 and FYB1 to promote tyrosine phosphorylation of CLNK by LYN. Interacts (via SH2 domain) with MAP4K1. Post-translationally, tyrosine-phosphorylated upon BCR cross-linking. Tyrosine phosphorylation at both Tyr-69 and Tyr-96 are required for BCR-induced calcium response and are essential to restore PLCG2-mediated signaling in BLNK-deficient DT40 cells, but this phosphorylation is dispensable in cells expressing LAT. Interacts with the SH2 domain of PLCG1 via phosphorylated Tyr-96. Tyrosine phosphorylation is increased when complexed with SKAP1 and FYB1.

It is found in the cytoplasm. Functionally, an adapter protein which plays a role in the regulation of immunoreceptor signaling, including PLC-gamma-mediated B-cell antigen receptor (BCR) signaling and FC-epsilon R1-mediated mast cell degranulation. Together with FGR, it acts as a negative regulator of natural killer cell-activating receptors and inhibits interferon-gamma production. Acts as a positive regulator of both T-cell receptor and natural killer T (NKT) cell receptor signaling in CD4-positive NKT cells. Together with MAP4K1, it enhances CD3-triggered activation of T-cells and subsequent IL2 production. May be involved in tumor necrosis factor induced cell death by promoting reactive oxidative species generation, and MLKL oligomerization, ultimately leading to necrosis. Involved in phosphorylation of LAT. May be involved in high affinity immunoglobulin epsilon receptor signaling in mast cells. In Homo sapiens (Human), this protein is Cytokine-dependent hematopoietic cell linker (CLNK).